We begin with the raw amino-acid sequence, 497 residues long: Paired box protein Pax-2-A (497 aa).

The paired DNA-binding region spans 16–142 (GHGGVNQLGG…SSINRIIRTK (127 aa)). The interval 19-75 (GVNQLGGVFVNGRPLPDVVRQRIVELAHQGVRPCDISRQLRVSHGCVSKILGRYYET) is PAI subdomain. Positions 94–142 (KVVDKIAEYKRQNPTMFAWEIRDRLLAEGICDNDTVPSVSSINRIIRTK) are RED subdomain. A disordered region spans residues 143–224 (VQQPFHPTPD…GDSQSSVESL (82 aa)). Over residues 166–178 (VPSTASPPVSSAS) the composition is skewed to low complexity.

As to expression, expression becomes spatially localized at mid-gastrula stages and is confined to the nervous system (midbrain, hindbrain, spinal cord), sensory organs (optic vesicle and stalk, otic vesicle), visceral arches, developing excretory system (pronephros, pronephric duct, rectal diverticulum, proctodaeum) and thyroid gland. Splicing does not appear to be tissue-specific and tissues displayed the same spectrum of splice variants.

It localises to the nucleus. In terms of biological role, probable transcription factor. Involved in kidney development, acting synergistically with lhx1/lim-1 in pronephric morphogenesis during the tailbud stages. This is Paired box protein Pax-2-A (pax2-a) from Xenopus laevis (African clawed frog).